A 346-amino-acid chain; its full sequence is Large ribosomal subunit protein uL3 (346 aa).

The disordered stretch occupies residues 324 to 346 (KPPKKKPPVERPQITYVSRESKQ).

This sequence belongs to the universal ribosomal protein uL3 family. In terms of assembly, part of the 50S ribosomal subunit. Forms a cluster with proteins L14 and L24e.

Its function is as follows. One of the primary rRNA binding proteins, it binds directly near the 3'-end of the 23S rRNA, where it nucleates assembly of the 50S subunit. The sequence is that of Large ribosomal subunit protein uL3 from Thermococcus gammatolerans (strain DSM 15229 / JCM 11827 / EJ3).